Here is a 429-residue protein sequence, read N- to C-terminus: Adenylosuccinate synthetase (429 aa).

GTP is bound by residues 12 to 18 (GDEGKGK) and 40 to 42 (GHT). Asp-13 acts as the Proton acceptor in catalysis. Mg(2+) is bound by residues Asp-13 and Gly-40. Residues 13–16 (DEGK), 38–41 (NAGH), Thr-129, Arg-143, Gln-223, Thr-238, and Arg-302 contribute to the IMP site. Catalysis depends on His-41, which acts as the Proton donor. 298-304 (TVTGRQR) provides a ligand contact to substrate. GTP-binding positions include Arg-304, 330-332 (KID), and 412-414 (STS).

This sequence belongs to the adenylosuccinate synthetase family. In terms of assembly, homodimer. The cofactor is Mg(2+).

Its subcellular location is the cytoplasm. The catalysed reaction is IMP + L-aspartate + GTP = N(6)-(1,2-dicarboxyethyl)-AMP + GDP + phosphate + 2 H(+). It participates in purine metabolism; AMP biosynthesis via de novo pathway; AMP from IMP: step 1/2. Its function is as follows. Plays an important role in the de novo pathway of purine nucleotide biosynthesis. Catalyzes the first committed step in the biosynthesis of AMP from IMP. The polypeptide is Adenylosuccinate synthetase (Erythrobacter litoralis (strain HTCC2594)).